The chain runs to 342 residues: N-acetyl-gamma-glutamyl-phosphate reductase (342 aa).

The active site involves Cys149.

Belongs to the NAGSA dehydrogenase family. Type 1 subfamily.

It localises to the cytoplasm. It carries out the reaction N-acetyl-L-glutamate 5-semialdehyde + phosphate + NADP(+) = N-acetyl-L-glutamyl 5-phosphate + NADPH + H(+). The protein operates within amino-acid biosynthesis; L-arginine biosynthesis; N(2)-acetyl-L-ornithine from L-glutamate: step 3/4. Functionally, catalyzes the NADPH-dependent reduction of N-acetyl-5-glutamyl phosphate to yield N-acetyl-L-glutamate 5-semialdehyde. This is N-acetyl-gamma-glutamyl-phosphate reductase from Rhodobacter capsulatus (strain ATCC BAA-309 / NBRC 16581 / SB1003).